Consider the following 629-residue polypeptide: Chaperone protein DnaK (629 aa).

Threonine 195 bears the Phosphothreonine; by autocatalysis mark. Disordered stretches follow at residues 514–533 (EAEQ…EKRN) and 543–629 (LGQL…KPAE). The span at 555–590 (DAKDRLKAAADEAEEAVRSDDDSRIERAQKQLEEAM) shows a compositional bias: basic and acidic residues. Over residues 595 to 614 (TAAQSGSQNQAGQGAQTQTG) the composition is skewed to low complexity. A compositionally biased stretch (basic and acidic residues) spans 615–629 (RQEDDVIDADFKPAE).

It belongs to the heat shock protein 70 family.

Its function is as follows. Acts as a chaperone. The polypeptide is Chaperone protein DnaK (Deinococcus geothermalis (strain DSM 11300 / CIP 105573 / AG-3a)).